Consider the following 352-residue polypeptide: Ribosomal RNA large subunit methyltransferase M (352 aa).

S-adenosyl-L-methionine is bound by residues Ser-187, 218-221, Asp-237, Asp-257, and Asp-273; that span reads APGG. The active-site Proton acceptor is Lys-302.

Belongs to the class I-like SAM-binding methyltransferase superfamily. RNA methyltransferase RlmE family. RlmM subfamily. In terms of assembly, monomer.

Its subcellular location is the cytoplasm. The enzyme catalyses cytidine(2498) in 23S rRNA + S-adenosyl-L-methionine = 2'-O-methylcytidine(2498) in 23S rRNA + S-adenosyl-L-homocysteine + H(+). Functionally, catalyzes the 2'-O-methylation at nucleotide C2498 in 23S rRNA. This chain is Ribosomal RNA large subunit methyltransferase M, found in Methylococcus capsulatus (strain ATCC 33009 / NCIMB 11132 / Bath).